A 104-amino-acid chain; its full sequence is Probable monothiol glutaredoxin 2 (104 aa).

The Glutaredoxin domain maps to 7–104; that stretch reads FEFIENEIKN…NGELEKMLKG (98 aa). Lys-24 contacts glutathione. Cys-32 contacts [2Fe-2S] cluster. Residues Arg-61, Phe-73, and 86-87 each bind glutathione; that span reads CD.

Belongs to the glutaredoxin family. Monothiol subfamily.

The polypeptide is Probable monothiol glutaredoxin 2 (grxC2) (Rickettsia felis (strain ATCC VR-1525 / URRWXCal2) (Rickettsia azadi)).